The following is a 526-amino-acid chain: Alpha-N-acetylgalactosaminide alpha-2,6-sialyltransferase 1 (526 aa).

The Cytoplasmic portion of the chain corresponds to 1-12; that stretch reads MTRYCRGLSQRQ. Residues 13-33 traverse the membrane as a helical; Signal-anchor for type II membrane protein segment; that stretch reads AFLLLTVLALLFILLFVVKDP. Residues 34–526 are Lumenal-facing; the sequence is RAKDSRCQFI…QRPQSDKAKN (493 aa). The interval 49–182 is disordered; the sequence is SAQENQQKAE…TRRRQRLKAS (134 aa). Over residues 81 to 106 the composition is skewed to basic and acidic residues; sequence KDLKKQEREAVQGEQAEGKEKRKLET. A compositionally biased stretch (polar residues) spans 161-171; the sequence is ATKSPASSPHP. Asn206, Asn228, Asn259, Asn303, and Asn388 each carry an N-linked (GlcNAc...) asparagine glycan. 2 cysteine pairs are disulfide-bonded: Cys207–Cys290 and Cys293–Cys461.

The protein belongs to the glycosyltransferase 29 family. Glycosylated; autosialylated. In terms of tissue distribution, submaxillary gland, mammary gland, spleen and colon.

It localises to the golgi apparatus membrane. The enzyme catalyses a beta-D-galactosyl-(1-&gt;3)-N-acetyl-alpha-D-galactosaminyl derivative + CMP-N-acetyl-beta-neuraminate = a beta-D-galactosyl-(1-&gt;3)-[N-acetyl-alpha-neuraminyl-(2-&gt;6)]-N-acetyl-alpha-D-galactosaminyl derivative + CMP + H(+). The catalysed reaction is a 3-O-[N-acetyl-alpha-D-galactosaminyl]-L-seryl-[protein] + CMP-N-acetyl-beta-neuraminate = a 3-O-[N-acetyl-alpha-neuraminosyl-(2-&gt;6)-N-acetyl-alpha-D-galactosaminyl]-L-seryl-[protein] + CMP + H(+). It catalyses the reaction a 3-O-[N-acetyl-alpha-D-galactosaminyl]-L-threonyl-[protein] + CMP-N-acetyl-beta-neuraminate = a 3-O-[N-acetyl-alpha-neuraminosyl-(2-&gt;6)-N-acetyl-alpha-D-galactosaminyl]-L-threonyl-[protein] + CMP + H(+). It carries out the reaction a 3-O-[beta-D-galactosyl-(1-&gt;3)-N-acetyl-alpha-D-galactosaminyl]-L-seryl-[protein] + CMP-N-acetyl-beta-neuraminate = a 3-O-{beta-D-galactosyl-(1-&gt;3)-[N-acetyl-alpha-neuraminosyl-(2-&gt;6)]-N-acetyl-alpha-D-galactosaminyl}-L-seryl-[protein] + CMP + H(+). The enzyme catalyses a 3-O-[beta-D-galactosyl-(1-&gt;3)-N-acetyl-alpha-D-galactosaminyl]-L-threonyl-[protein] + CMP-N-acetyl-beta-neuraminate = a 3-O-{beta-D-galactosyl-(1-&gt;3)-[N-acetyl-alpha-neuraminosyl-(2-&gt;6)]-N-acetyl-alpha-D-galactosaminyl}-L-threonyl-[protein] + CMP + H(+). The catalysed reaction is a 3-O-[N-acetyl-alpha-neuraminyl-(2-&gt;3)-beta-D-galactosyl-(1-&gt;3)-N-acetyl-alpha-D-galactosaminyl]-L-threonyl-[protein] + CMP-N-acetyl-beta-neuraminate = a 3-O-{alpha-Neu5Ac-(2-&gt;3)-beta-D-Gal-(1-&gt;3)-[alpha-Neu5Ac-(2-&gt;6)]-alpha-D-GalNAc}-L-threonyl-[protein] + CMP + H(+). It participates in protein modification; protein glycosylation. Protein sialyltransferase specifically expressed in goblet cells that plays a key role in intestinal host-commensal homeostasis. Conjugates sialic acid with an alpha-2-6 linkage to N-acetylgalactosamine (GalNAc) glycan chains linked to serine or threonine in glycoproteins. Catalyzes the formation of the sialyl-Tn (S-Tn) antigen, an antigen found in intestinal goblet cells. Protein sialylation in globlet cells is essential for mucus integrity and is required to protect the intestinal mucus against excessive bacterial proteolytic degradation. The sequence is that of Alpha-N-acetylgalactosaminide alpha-2,6-sialyltransferase 1 from Mus musculus (Mouse).